Reading from the N-terminus, the 360-residue chain is MKWKKSLTGLSSYKPGKREEEVMAELGLTEITKLSSNENPLGTSPKVAAMQANSCVETEIYPDGWASSLRKEVAAFYQLEEEELIFTAGVDELIELLTRVLLDNTTNTVMATPTFVQYRQNALIEGAEVKEIPLLADGEHNLEGMLDAIDEKTTIVWICNPNNPTGNYIELADIQAFLDKVPSDVLVVLDEAYIEYVTPQPEKHEKLIRTYKNVIITRTFSKIYGLASARVGYGIADKEIINQLNIVRPPFNTTSIGQKLAIEAIKDQAFIEACRTSNANGIKQYEAFAKRFEQVKLYPANGNFVLIDLGIEAGTIFSYLEKNGYITRSGAALGFPTAVRITIGKEEENSAVIALLEKLL.

At Lys222 the chain carries N6-(pyridoxal phosphate)lysine.

The protein belongs to the class-II pyridoxal-phosphate-dependent aminotransferase family. Histidinol-phosphate aminotransferase subfamily. As to quaternary structure, homodimer. Pyridoxal 5'-phosphate is required as a cofactor.

It catalyses the reaction L-histidinol phosphate + 2-oxoglutarate = 3-(imidazol-4-yl)-2-oxopropyl phosphate + L-glutamate. The protein operates within amino-acid biosynthesis; L-histidine biosynthesis; L-histidine from 5-phospho-alpha-D-ribose 1-diphosphate: step 7/9. This chain is Histidinol-phosphate aminotransferase, found in Listeria welshimeri serovar 6b (strain ATCC 35897 / DSM 20650 / CCUG 15529 / CIP 8149 / NCTC 11857 / SLCC 5334 / V8).